A 451-amino-acid polypeptide reads, in one-letter code: MTANARIPARKLPLYRSLYVQVLFAVVVGVLLGHFYPEIGEKMKPLGDGFIKLIKMIIAPIIFCTVVVGIAGMEDMKKVGRTGGLALLYFEIVSSVALVIGLIVVNVLQPGAGMNVDASAIDTKSIAAYTAPGKMGTTTDFLMNIIPTTVVDAFAKGEILQVLLIAVMFGFALHRFGGRGTLVFDFIEKTSHVLFTIVGYIMKVAPIGAFGAMSFTIGKYGVGSLLSLGKLMGSFYLTCLLFVFVVLGLIARFHGFSIWKFVKYIKEELLIVLGTSSSESVLPRMMEKMENLGARKTTVGLVIPTGYSFNLDGTSIYLTMAAVFIAQATNTPLDITHQITLLLVLLLTSKGAAGITGSGFIVLAATLSAVGHVPVAGLALILGIDRFMSEARALTNLVGNGVATIVVAKWTGDLDTEQLKQRLDNPDWVAAQEPEAILDHKTERMDVSGSR.

9 helical membrane-spanning segments follow: residues 17–37 (SLYV…HFYP), 53–73 (LIKM…IAGM), 85–105 (LALL…LIVV), 153–173 (AFAK…GFAL), 193–213 (VLFT…FGAM), 231–251 (LMGS…GLIA), 306–326 (GYSF…VFIA), 339–359 (ITLL…TGSG), and 361–381 (IVLA…LALI).

It belongs to the dicarboxylate/amino acid:cation symporter (DAACS) (TC 2.A.23) family.

It localises to the cell inner membrane. Responsible for the transport of dicarboxylates such as succinate, fumarate, and malate from the periplasm across the membrane. The chain is C4-dicarboxylate transport protein from Paracidovorax citrulli (strain AAC00-1) (Acidovorax citrulli).